A 201-amino-acid chain; its full sequence is Proteasome subunit beta type-2 (201 aa).

N-acetylmethionine is present on M1.

It belongs to the peptidase T1B family. In terms of assembly, the 26S proteasome consists of a 20S proteasome core and two 19S regulatory subunits. The 20S proteasome core is a barrel-shaped complex made of 28 subunits that are arranged in four stacked rings. The two outer rings are each formed by seven alpha subunits, and the two inner rings are formed by seven beta subunits. The proteolytic activity is exerted by three beta-subunits PSMB5, PSMB6 and PSMB7. As to quaternary structure, (Microbial infection) Interacts with HIV-1 protein Tat.

Its subcellular location is the cytoplasm. The protein resides in the nucleus. Functionally, non-catalytic component of the 20S core proteasome complex involved in the proteolytic degradation of most intracellular proteins. This complex plays numerous essential roles within the cell by associating with different regulatory particles. Associated with two 19S regulatory particles, forms the 26S proteasome and thus participates in the ATP-dependent degradation of ubiquitinated proteins. The 26S proteasome plays a key role in the maintenance of protein homeostasis by removing misfolded or damaged proteins that could impair cellular functions, and by removing proteins whose functions are no longer required. Associated with the PA200 or PA28, the 20S proteasome mediates ubiquitin-independent protein degradation. This type of proteolysis is required in several pathways including spermatogenesis (20S-PA200 complex) or generation of a subset of MHC class I-presented antigenic peptides (20S-PA28 complex). In Homo sapiens (Human), this protein is Proteasome subunit beta type-2.